The sequence spans 708 residues: Wall-associated receptor kinase-like 14 (708 aa).

The N-terminal stretch at Met1 to Ala42 is a signal peptide. 7 N-linked (GlcNAc...) asparagine glycosylation sites follow: Asn43, Asn88, Asn101, Asn131, Asn158, Asn167, and Asn184. Residues Asn43–Thr285 lie on the Extracellular side of the membrane. Residues Ile286–Cys306 traverse the membrane as a helical segment. At Lys307 to Arg708 the chain is on the cytoplasmic side. Residues Phe348–Ile629 form the Protein kinase domain. ATP is bound by residues Leu354 to Val362 and Lys376. Catalysis depends on Asp472, which acts as the Proton acceptor. Disordered stretches follow at residues Ser636–Ser659 and Val686–Arg708. Residues Ser643–Val652 are compositionally biased toward basic and acidic residues. A compositionally biased stretch (polar residues) spans Ser692–Arg708.

Belongs to the protein kinase superfamily. Ser/Thr protein kinase family.

The protein localises to the membrane. The catalysed reaction is L-seryl-[protein] + ATP = O-phospho-L-seryl-[protein] + ADP + H(+). It carries out the reaction L-threonyl-[protein] + ATP = O-phospho-L-threonyl-[protein] + ADP + H(+). Serine/threonine-protein kinase that may function as a signaling receptor of extracellular matrix component. This Arabidopsis thaliana (Mouse-ear cress) protein is Wall-associated receptor kinase-like 14 (WAKL14).